We begin with the raw amino-acid sequence, 367 residues long: 3-ketodihydrosphingosine reductase ksrA (367 aa).

The chain crosses the membrane as a helical span at residues 12–32 (ASPATLGISLILCGFIVYSVS). NADPH is bound by residues glycine 53, serine 55, glycine 57, arginine 78, lysine 82, aspartate 108, and leucine 109. Positions 53 to 57 (GGSDG) match the GXSXG motif. Residues 193–213 (LIFTCSTLAFVSIAGYAPYSP) traverse the membrane as a helical segment. Residue tyrosine 211 is the Proton acceptor of the active site. NADP(+) is bound by residues tyrosine 211, lysine 215, and isoleucine 259. The Lowers pKa of active site Tyr role is filled by lysine 215.

Belongs to the short-chain dehydrogenases/reductases (SDR) family.

The protein localises to the endoplasmic reticulum membrane. The enzyme catalyses sphinganine + NADP(+) = 3-oxosphinganine + NADPH + H(+). It participates in lipid metabolism; sphingolipid metabolism. In terms of biological role, catalyzes the reduction of 3'-oxosphinganine (3-ketodihydrosphingosine/KDS) to sphinganine (dihydrosphingosine/DHS), the second step of de novo sphingolipid biosynthesis. The polypeptide is 3-ketodihydrosphingosine reductase ksrA (Aspergillus fumigatus (strain ATCC MYA-4609 / CBS 101355 / FGSC A1100 / Af293) (Neosartorya fumigata)).